The following is a 449-amino-acid chain: UDP-N-acetylglucosamine 1-carboxyvinyltransferase (449 aa).

Lys-51–Asn-52 contacts phosphoenolpyruvate. Arg-121 is a UDP-N-acetyl-alpha-D-glucosamine binding site. The Proton donor role is filled by Cys-145. Cys-145 carries the 2-(S-cysteinyl)pyruvic acid O-phosphothioketal modification. UDP-N-acetyl-alpha-D-glucosamine is bound by residues Arg-150–Gln-154, Asp-333, and Ile-355.

Belongs to the EPSP synthase family. MurA subfamily.

It localises to the cytoplasm. It catalyses the reaction phosphoenolpyruvate + UDP-N-acetyl-alpha-D-glucosamine = UDP-N-acetyl-3-O-(1-carboxyvinyl)-alpha-D-glucosamine + phosphate. It functions in the pathway cell wall biogenesis; peptidoglycan biosynthesis. Cell wall formation. Adds enolpyruvyl to UDP-N-acetylglucosamine. The chain is UDP-N-acetylglucosamine 1-carboxyvinyltransferase from Burkholderia mallei (strain ATCC 23344).